Consider the following 897-residue polypeptide: N-terminal acetyltransferase A complex auxiliary subunit NAA15 (897 aa).

TPR repeat units lie at residues 77 to 110 (HVCW…DPDN), 111 to 144 (LEIL…KPNH), 189 to 222 (TEMI…IVDK), 223 to 256 (LSYK…NPDN), 298 to 331 (SSAV…KGVP), 380 to 413 (LWTL…TPTV), and 488 to 523 (QCMW…YADI). 2 disordered regions span residues 578–640 (KSTA…DPHG) and 863–897 (SRKS…SVAT). Basic and acidic residues predominate over residues 602-617 (KAEARAKKEAESKSEE). Polar residues predominate over residues 863-872 (SRKSNENGDT).

In terms of assembly, part of the NatA complex. Associates with ribosomes. Interacts with NAA10. In terms of tissue distribution, expressed in leaves, roots, shoots and flowers.

Its function is as follows. Auxiliary subunit of the NatA N-alpha-acetyltransferase complex. Required for male gametocyte development, embryogenesis, suspensor development and the formation of the quiescent center (QC) in the root meristem. Involved in plant immunity through the regulation of SNC1 stability. Required for embryo development. The polypeptide is N-terminal acetyltransferase A complex auxiliary subunit NAA15 (Arabidopsis thaliana (Mouse-ear cress)).